Reading from the N-terminus, the 339-residue chain is tRNA N6-adenosine threonylcarbamoyltransferase (339 aa).

Positions 111 and 115 each coordinate Fe cation. Substrate contacts are provided by residues 134–138 (LVSGG), Asp167, Gly180, and Asn272. Residue Asp300 participates in Fe cation binding.

Belongs to the KAE1 / TsaD family. It depends on Fe(2+) as a cofactor.

Its subcellular location is the cytoplasm. It carries out the reaction L-threonylcarbamoyladenylate + adenosine(37) in tRNA = N(6)-L-threonylcarbamoyladenosine(37) in tRNA + AMP + H(+). Required for the formation of a threonylcarbamoyl group on adenosine at position 37 (t(6)A37) in tRNAs that read codons beginning with adenine. Is involved in the transfer of the threonylcarbamoyl moiety of threonylcarbamoyl-AMP (TC-AMP) to the N6 group of A37, together with TsaE and TsaB. TsaD likely plays a direct catalytic role in this reaction. The polypeptide is tRNA N6-adenosine threonylcarbamoyltransferase (Vibrio cholerae serotype O1 (strain ATCC 39541 / Classical Ogawa 395 / O395)).